The chain runs to 212 residues: Adenine phosphoribosyltransferase (212 aa).

The protein belongs to the purine/pyrimidine phosphoribosyltransferase family. As to quaternary structure, homodimer.

It localises to the cytoplasm. The enzyme catalyses AMP + diphosphate = 5-phospho-alpha-D-ribose 1-diphosphate + adenine. Its pathway is purine metabolism; AMP biosynthesis via salvage pathway; AMP from adenine: step 1/1. In terms of biological role, catalyzes a salvage reaction resulting in the formation of AMP, that is energically less costly than de novo synthesis. This is Adenine phosphoribosyltransferase from Mycobacterium tuberculosis (strain CDC 1551 / Oshkosh).